A 480-amino-acid chain; its full sequence is EGF-like repeat and discoidin I-like domain-containing protein 3 (480 aa).

Residues 1 to 23 (MKRSVAVWLLVGLSLGVPQFGKG) form the signal peptide. One can recognise an EGF-like 1 domain in the interval 24-60 (DICDPNPCENGGICLPGLADGSFSCECPDGFTDPNCS). 3 disulfides stabilise this stretch: C26-C37, C31-C48, and C50-C59. O-linked (GalNAc...) threonine glycosylation is present at T73. 2 EGF-like domains span residues 74–117 (SAGP…IHCQ) and 119–155 (NINECEVEPCKNGGICTDLVANYSCECPGEFMGRNCQ). 3 disulfide bridges follow: C78/C89, C83/C105, and C107/C116. O-linked (Fuc...) threonine glycosylation occurs at T88. The Cell attachment site motif lies at 96–98 (RGD). Residues N119, I120, and E122 each coordinate Ca(2+). 6 cysteine pairs are disulfide-bonded: C123–C134, C128–C143, C145–C154, C158–C314, C301–C305, and C319–C476. D136 and L137 together coordinate Ca(2+). N140 is a glycosylation site (N-linked (GlcNAc...) asparagine). F5/8 type C domains follow at residues 158-314 (CSGP…LLGC) and 319-476 (CSEP…LLGC).

The protein localises to the secreted. Promotes adhesion of endothelial cells through interaction with the alpha-v/beta-3 integrin receptor. Inhibits formation of vascular-like structures. May be involved in regulation of vascular morphogenesis of remodeling in embryonic development. The sequence is that of EGF-like repeat and discoidin I-like domain-containing protein 3 (EDIL3) from Homo sapiens (Human).